Here is a 351-residue protein sequence, read N- to C-terminus: Nicotinate-nucleotide--dimethylbenzimidazole phosphoribosyltransferase (351 aa).

Glutamate 317 functions as the Proton acceptor in the catalytic mechanism.

This sequence belongs to the CobT family.

It carries out the reaction 5,6-dimethylbenzimidazole + nicotinate beta-D-ribonucleotide = alpha-ribazole 5'-phosphate + nicotinate + H(+). The protein operates within nucleoside biosynthesis; alpha-ribazole biosynthesis; alpha-ribazole from 5,6-dimethylbenzimidazole: step 1/2. Its function is as follows. Catalyzes the synthesis of alpha-ribazole-5'-phosphate from nicotinate mononucleotide (NAMN) and 5,6-dimethylbenzimidazole (DMB). This is Nicotinate-nucleotide--dimethylbenzimidazole phosphoribosyltransferase from Pseudomonas putida (strain ATCC 47054 / DSM 6125 / CFBP 8728 / NCIMB 11950 / KT2440).